A 261-amino-acid chain; its full sequence is Ribosome-inactivating protein PD-L3/PD-L4 (261 aa).

The N-linked (GlcNAc...) asparagine; in PD-L3 glycan is linked to Asn10. Cystine bridges form between Cys34/Cys258 and Cys84/Cys105. Glu175 is an active-site residue.

The protein belongs to the ribosome-inactivating protein family. Type 1 RIP subfamily.

The catalysed reaction is Endohydrolysis of the N-glycosidic bond at one specific adenosine on the 28S rRNA.. Functionally, inhibits protein synthesis. Does not cleave supercoiled pBR322 dsDNA. In Phytolacca dioica (Bella sombra tree), this protein is Ribosome-inactivating protein PD-L3/PD-L4.